Here is a 147-residue protein sequence, read N- to C-terminus: D-aminoacyl-tRNA deacylase (147 aa).

The Gly-cisPro motif, important for rejection of L-amino acids motif lies at 136-137 (GP).

It belongs to the DTD family. Homodimer.

The protein resides in the cytoplasm. It carries out the reaction glycyl-tRNA(Ala) + H2O = tRNA(Ala) + glycine + H(+). The catalysed reaction is a D-aminoacyl-tRNA + H2O = a tRNA + a D-alpha-amino acid + H(+). Its function is as follows. An aminoacyl-tRNA editing enzyme that deacylates mischarged D-aminoacyl-tRNAs. Also deacylates mischarged glycyl-tRNA(Ala), protecting cells against glycine mischarging by AlaRS. Acts via tRNA-based rather than protein-based catalysis; rejects L-amino acids rather than detecting D-amino acids in the active site. By recycling D-aminoacyl-tRNA to D-amino acids and free tRNA molecules, this enzyme counteracts the toxicity associated with the formation of D-aminoacyl-tRNA entities in vivo and helps enforce protein L-homochirality. This chain is D-aminoacyl-tRNA deacylase, found in Streptococcus pneumoniae (strain P1031).